Here is a 122-residue protein sequence, read N- to C-terminus: Large ribosomal subunit protein uL14c (122 aa).

This sequence belongs to the universal ribosomal protein uL14 family. Part of the 50S ribosomal subunit.

Its subcellular location is the plastid. The protein resides in the chloroplast. Its function is as follows. Binds to 23S rRNA. The polypeptide is Large ribosomal subunit protein uL14c (Lepidium virginicum (Virginia pepperweed)).